Consider the following 535-residue polypeptide: Methylmalonate-semialdehyde/malonate-semialdehyde dehydrogenase [acylating], mitochondrial (535 aa).

A mitochondrion-targeting transit peptide spans 1-33 (MAALLAAAAVRARILQVSSKVKSSPTWYSASSF). N6-acetyllysine; alternate occurs at positions 47, 52, 55, and 76. Residues lysine 47, lysine 52, lysine 55, and lysine 76 each carry the N6-succinyllysine; alternate modification. Lysine 87 carries the post-translational modification N6-acetyllysine. 2 positions are modified to N6-acetyllysine; alternate: lysine 117 and lysine 129. N6-succinyllysine; alternate occurs at positions 117 and 129. Residues alanine 183, phenylalanine 185, lysine 209, glutamate 212, arginine 213, and serine 262 each contribute to the NAD(+) site. Serine 262 bears the Phosphoserine mark. Position 298 is an N6-acetyllysine (lysine 298). Cysteine 317 functions as the Nucleophile in the catalytic mechanism. Residues lysine 330 and lysine 331 each carry the N6-acetyllysine modification. N6-acetyllysine; alternate occurs at positions 364 and 376. N6-succinyllysine; alternate occurs at positions 364 and 376. At serine 380 the chain carries Phosphoserine. At lysine 391 the chain carries N6-succinyllysine. Glutamate 417 contacts NAD(+). Lysine 500 bears the N6-acetyllysine mark. Lysine 517 is modified (N6-succinyllysine).

This sequence belongs to the aldehyde dehydrogenase family. As to quaternary structure, homotetramer.

The protein resides in the mitochondrion. The catalysed reaction is 3-oxopropanoate + NAD(+) + CoA + H2O = hydrogencarbonate + acetyl-CoA + NADH + H(+). The enzyme catalyses 2-methyl-3-oxopropanoate + NAD(+) + CoA + H2O = propanoyl-CoA + hydrogencarbonate + NADH + H(+). It catalyses the reaction (R)-2-methyl-3-oxopropanoate + NAD(+) + CoA + H2O = propanoyl-CoA + hydrogencarbonate + NADH + H(+). It carries out the reaction (S)-2-methyl-3-oxopropanoate + NAD(+) + CoA + H2O = propanoyl-CoA + hydrogencarbonate + NADH + H(+). Its function is as follows. Malonate and methylmalonate semialdehyde dehydrogenase involved in the catabolism of valine, thymine, and compounds catabolized by way of beta-alanine, including uracil and cytidine. The chain is Methylmalonate-semialdehyde/malonate-semialdehyde dehydrogenase [acylating], mitochondrial from Homo sapiens (Human).